The following is a 330-amino-acid chain: Anthranilate phosphoribosyltransferase (330 aa).

Residues glycine 75, 78–79, threonine 83, 85–88, 103–111, and alanine 115 contribute to the 5-phospho-alpha-D-ribose 1-diphosphate site; these read GD, NVST, and KHGNRAASS. Residue glycine 75 coordinates anthranilate. Residue serine 87 coordinates Mg(2+). Asparagine 106 contacts anthranilate. Arginine 161 contacts anthranilate. Mg(2+) contacts are provided by aspartate 220 and glutamate 221.

It belongs to the anthranilate phosphoribosyltransferase family. In terms of assembly, homodimer. Requires Mg(2+) as cofactor.

It carries out the reaction N-(5-phospho-beta-D-ribosyl)anthranilate + diphosphate = 5-phospho-alpha-D-ribose 1-diphosphate + anthranilate. It participates in amino-acid biosynthesis; L-tryptophan biosynthesis; L-tryptophan from chorismate: step 2/5. Catalyzes the transfer of the phosphoribosyl group of 5-phosphorylribose-1-pyrophosphate (PRPP) to anthranilate to yield N-(5'-phosphoribosyl)-anthranilate (PRA). The sequence is that of Anthranilate phosphoribosyltransferase from Novosphingobium aromaticivorans (strain ATCC 700278 / DSM 12444 / CCUG 56034 / CIP 105152 / NBRC 16084 / F199).